Consider the following 556-residue polypeptide: Formate--tetrahydrofolate ligase (556 aa).

65-72 (TPAGEGKS) contributes to the ATP binding site.

This sequence belongs to the formate--tetrahydrofolate ligase family.

The catalysed reaction is (6S)-5,6,7,8-tetrahydrofolate + formate + ATP = (6R)-10-formyltetrahydrofolate + ADP + phosphate. It participates in one-carbon metabolism; tetrahydrofolate interconversion. This Streptococcus thermophilus (strain ATCC BAA-250 / LMG 18311) protein is Formate--tetrahydrofolate ligase.